Here is a 119-residue protein sequence, read N- to C-terminus: Small ribosomal subunit protein bS6 (119 aa).

It belongs to the bacterial ribosomal protein bS6 family.

Functionally, binds together with bS18 to 16S ribosomal RNA. The protein is Small ribosomal subunit protein bS6 of Thermosipho africanus (strain TCF52B).